The chain runs to 197 residues: Probable GTP-binding protein EngB (197 aa).

The region spanning 22–195 (GYPEIALVGR…WNWIEAQAFG (174 aa)) is the EngB-type G domain. GTP-binding positions include 30 to 37 (GRSNVGKS), 57 to 61 (GKTQT), 75 to 78 (DVPG), 142 to 145 (TKSD), and 174 to 176 (FSA). Residues Ser-37 and Thr-59 each coordinate Mg(2+).

It belongs to the TRAFAC class TrmE-Era-EngA-EngB-Septin-like GTPase superfamily. EngB GTPase family. Mg(2+) serves as cofactor.

Its function is as follows. Necessary for normal cell division and for the maintenance of normal septation. This chain is Probable GTP-binding protein EngB, found in Levilactobacillus brevis (strain ATCC 367 / BCRC 12310 / CIP 105137 / JCM 1170 / LMG 11437 / NCIMB 947 / NCTC 947) (Lactobacillus brevis).